The chain runs to 236 residues: Sperm flagellar protein 1 (236 aa).

In terms of domain architecture, Calponin-homology (CH) spans 7-112 (EEALHQLYLW…VLIPLRQRLE (106 aa)). The segment at 118–177 (RKQGIGSLQELAPQDGTDYMDVGLSQKARGEGVPDPQGRGQLREGRLPVPRPPGDSQALQ) is disordered. Positions 183–236 (ILQIAEKEQELLASQETVQVLQMKVRRLEHLLQLKNVRIEDLSRRLQQAERKQR) are essential for homodimerization and microtubule bundling activity.

As to quaternary structure, homodimer. Interacts with actin, TJP1, CGN and CDH1.

The protein localises to the cytoplasm. The protein resides in the cell projection. It localises to the cilium. Its subcellular location is the flagellum. It is found in the cytoskeleton. The protein localises to the cilium axoneme. The protein resides in the apical cell membrane. It localises to the basolateral cell membrane. Its subcellular location is the stress fiber. It is found in the microvillus. The protein localises to the lamellipodium. The protein resides in the filopodium. In terms of biological role, microtubule-associated protein involved in the stabilization of microtubules along the axis of migration during radial intercalation. Promotes the establishment and stabilization of an axis of microtubules required for the active migration of cells into the outer epithelium. Microtubule-associated protein that promotes microtubule bundling and stabilizes microtubules against depolymerization in response to cold shock. Essential for ciliary central apparatus formation which requires both its microtubule-binding and bundling activities and for ciliary localization of HYDIN and SPAG6 in ependymal cilia. Binds actin in intestinal epithelial cells (IECs), essential for IECs survival and contributes to formation of filopodia and lamellipodia in migrating IECs. Regulates planar cell polarity signaling pathway and asymmetric microtubule accumulation in ciliated epithelia. The sequence is that of Sperm flagellar protein 1 (SPEF1) from Bos taurus (Bovine).